A 943-amino-acid polypeptide reads, in one-letter code: Centromere protein C (943 aa).

A Glycyl lysine isopeptide (Lys-Gly) (interchain with G-Cter in SUMO2) cross-link involves residue K45. The segment at 70–91 (CIQSPSKECQKSHPKSVPVSSK) is disordered. Residues S73 and S96 each carry the phosphoserine modification. Residue K119 forms a Glycyl lysine isopeptide (Lys-Gly) (interchain with G-Cter in SUMO2) linkage. T130 carries the phosphothreonine modification. Residue K134 forms a Glycyl lysine isopeptide (Lys-Gly) (interchain with G-Cter in SUMO2) linkage. S146 is modified (phosphoserine). Residue K180 forms a Glycyl lysine isopeptide (Lys-Gly) (interchain with G-Cter in SUMO2) linkage. T183 carries the post-translational modification Phosphothreonine. The residue at position 189 (S189) is a Phosphoserine. Glycyl lysine isopeptide (Lys-Gly) (interchain with G-Cter in SUMO2) cross-links involve residues K212 and K217. Basic and acidic residues predominate over residues 224–239 (VSDEEDKTSEGQERKP). Residues 224-250 (VSDEEDKTSEGQERKPSGSSQNRIRDS) form a disordered region. Residue S225 is modified to Phosphoserine. Glycyl lysine isopeptide (Lys-Gly) (interchain with G-Cter in SUMO2) cross-links involve residues K238 and K260. Residues 259-273 (KKSFSTLFLETVKRK) carry the Nuclear localization signal motif. Phosphoserine is present on S261. Residues K271, K273, and K297 each participate in a glycyl lysine isopeptide (Lys-Gly) (interchain with G-Cter in SUMO2) cross-link. S316, S333, S376, and S397 each carry phosphoserine. Positions 358–377 (LANDKHSHKPHPVETSQPSD) are disordered. The disordered stretch occupies residues 403 to 513 (YSKNAEKPSR…SKNKLVPEEV (111 aa)). Positions 412 to 426 (RSKRTIKQKQRRKFM) are enriched in basic residues. Composition is skewed to basic and acidic residues over residues 438–463 (QSKD…RNME) and 488–510 (TRKD…KLVP). Residue S439 is modified to Phosphoserine. K440 is covalently cross-linked (Glycyl lysine isopeptide (Lys-Gly) (interchain with G-Cter in SUMO2)). Residues 484–499 (KKSSTRKDKEESKKKR) carry the Nuclear localization signal motif. S528 carries the phosphoserine modification. A Glycyl lysine isopeptide (Lys-Gly) (interchain with G-Cter in SUMO2) cross-link involves residue K534. Disordered stretches follow at residues 537–587 (ESPV…ATKG) and 632–717 (DCSR…KQSK). S538 bears the Phosphoserine mark. Residues 558 to 574 (RKSTKKTNQSSKNIRKK) carry the Nuclear localization signal motif. Over residues 570 to 583 (NIRKKTIPLKRQKT) the composition is skewed to basic residues. Positions 633–672 (CSRSTRSSKNEDNIMTAQNVPLKPQTSGYTCNIPTESNLD) are enriched in polar residues. K677 participates in a covalent cross-link: Glycyl lysine isopeptide (Lys-Gly) (interchain with G-Cter in SUMO2). A phosphoserine mark is found at S684, S709, and S710. Residues 706 to 715 (VHGSSDDSKQ) are compositionally biased toward basic and acidic residues. K727 is covalently cross-linked (Glycyl lysine isopeptide (Lys-Gly) (interchain with G-Cter in SUMO2)). A Phosphothreonine modification is found at T734. Residues 737–759 (VRRTKRTRLKPLEYWRGERIDYQ) form an MIF2 homology domain II region. S763 and S773 each carry phosphoserine. Residues 780 to 798 (KRKAKENIGKVNKKSNKKR) carry the Nuclear localization signal motif. A Glycyl lysine isopeptide (Lys-Gly) (interchain with G-Cter in SUMO2) cross-link involves residue K807. The tract at residues 890–943 (LVFYVNFGDLLCTLHETPYILSTGDSFYVPSGNYYNIKNLRNEESVLLFTQIKR) is MIF2 homology domain III.

This sequence belongs to the CENP-C/MIF2 family. As to quaternary structure, oligomer. Component of the CENPA-NAC complex, at least composed of CENPA, CENPC, CENPH, CENPM, CENPN, CENPT and CENPU. The CENPA-NAC complex interacts with the CENPA-CAD complex, composed of CENPI, CENPK, CENPL, CENPO, CENPP, CENPQ, CENPR and CENPS. Binds to DAXX. Interacts with DNMT3B. Interacts directly with CENPA. Identified in a centromere complex containing histones H2A, H2B and H4, and at least CENPA, CENPB, CENPC, CENPT, CENPN, HJURP, SUPT16H, SSRP1 and RSF1. Interacts with MEIKIN.

The protein localises to the nucleus. The protein resides in the chromosome. Its subcellular location is the centromere. It is found in the kinetochore. Functionally, component of the CENPA-NAC (nucleosome-associated) complex, a complex that plays a central role in assembly of kinetochore proteins, mitotic progression and chromosome segregation. The CENPA-NAC complex recruits the CENPA-CAD (nucleosome distal) complex and may be involved in incorporation of newly synthesized CENPA into centromeres. CENPC recruits DNA methylation and DNMT3B to both centromeric and pericentromeric satellite repeats and regulates the histone code in these regions. This chain is Centromere protein C (CENPC), found in Homo sapiens (Human).